A 627-amino-acid chain; its full sequence is Altered inheritance of mitochondria protein 9, mitochondrial (627 aa).

The transit peptide at 1 to 43 directs the protein to the mitochondrion; it reads MIRYTVAGHSRRCVVGASKRVGAIKCITVAATKRFISNKPNEV.

It belongs to the AIM9 family.

The protein localises to the mitochondrion. The polypeptide is Altered inheritance of mitochondria protein 9, mitochondrial (AIM9) (Saccharomyces cerevisiae (strain ATCC 204508 / S288c) (Baker's yeast)).